The following is a 96-amino-acid chain: ATP synthase subunit c (96 aa).

2 consecutive transmembrane segments (helical) span residues 28 to 50 (LGAGVAMGIGAIGPGVGEGNIGA) and 75 to 95 (AVTESTGLYSLVVALILLFVL).

The protein belongs to the ATPase C chain family. F-type ATPases have 2 components, F(1) - the catalytic core - and F(0) - the membrane proton channel. F(1) has five subunits: alpha(3), beta(3), gamma(1), delta(1), epsilon(1). F(0) has three main subunits: a(1), b(2) and c(10-14). The alpha and beta chains form an alternating ring which encloses part of the gamma chain. F(1) is attached to F(0) by a central stalk formed by the gamma and epsilon chains, while a peripheral stalk is formed by the delta and b chains.

The protein resides in the cell inner membrane. Its function is as follows. F(1)F(0) ATP synthase produces ATP from ADP in the presence of a proton or sodium gradient. F-type ATPases consist of two structural domains, F(1) containing the extramembraneous catalytic core and F(0) containing the membrane proton channel, linked together by a central stalk and a peripheral stalk. During catalysis, ATP synthesis in the catalytic domain of F(1) is coupled via a rotary mechanism of the central stalk subunits to proton translocation. Key component of the F(0) channel; it plays a direct role in translocation across the membrane. A homomeric c-ring of between 10-14 subunits forms the central stalk rotor element with the F(1) delta and epsilon subunits. This Petrotoga mobilis (strain DSM 10674 / SJ95) protein is ATP synthase subunit c.